A 242-amino-acid polypeptide reads, in one-letter code: Methylthioribulose-1-phosphate dehydratase (242 aa).

A disordered region spans residues 1–23 (MTDQREEPQGSNDHLVRSSDPEH). Residue C102 participates in substrate binding. Positions 119 and 121 each coordinate Zn(2+). Catalysis depends on E148, which acts as the Proton donor/acceptor. H204 lines the Zn(2+) pocket.

The protein belongs to the aldolase class II family. MtnB subfamily. Requires Zn(2+) as cofactor.

It localises to the cytoplasm. It carries out the reaction 5-(methylsulfanyl)-D-ribulose 1-phosphate = 5-methylsulfanyl-2,3-dioxopentyl phosphate + H2O. It participates in amino-acid biosynthesis; L-methionine biosynthesis via salvage pathway; L-methionine from S-methyl-5-thio-alpha-D-ribose 1-phosphate: step 2/6. Its function is as follows. Catalyzes the dehydration of methylthioribulose-1-phosphate (MTRu-1-P) into 2,3-diketo-5-methylthiopentyl-1-phosphate (DK-MTP-1-P). The protein is Methylthioribulose-1-phosphate dehydratase of Uncinocarpus reesii (strain UAMH 1704).